A 59-amino-acid chain; its full sequence is Large ribosomal subunit protein uL30 (59 aa).

The protein belongs to the universal ribosomal protein uL30 family. In terms of assembly, part of the 50S ribosomal subunit.

This chain is Large ribosomal subunit protein uL30, found in Ectopseudomonas mendocina (strain ymp) (Pseudomonas mendocina).